The sequence spans 179 residues: Ribosome maturation factor RimM (179 aa).

The region spanning 95-174 (KDEFFYFDIL…QIFCTQDAFL (80 aa)) is the PRC barrel domain.

Belongs to the RimM family. Binds ribosomal protein uS19.

It localises to the cytoplasm. Functionally, an accessory protein needed during the final step in the assembly of 30S ribosomal subunit, possibly for assembly of the head region. Essential for efficient processing of 16S rRNA. May be needed both before and after RbfA during the maturation of 16S rRNA. It has affinity for free ribosomal 30S subunits but not for 70S ribosomes. The sequence is that of Ribosome maturation factor RimM from Campylobacter jejuni subsp. doylei (strain ATCC BAA-1458 / RM4099 / 269.97).